Here is a 354-residue protein sequence, read N- to C-terminus: Vascular endothelial growth factor D (354 aa).

The first 21 residues, 1–21 (MYREWVVVNVFMMLYVQLVQG), serve as a signal peptide directing secretion. A propeptide spans 22 to 88 (SSNEHGPVKR…SRSASHRSTR (67 aa)) (or 99 (in a minor form)). Cystine bridges form between Cys-111–Cys-153, Cys-142–Cys-189, and Cys-146–Cys-191. N-linked (GlcNAc...) asparagine glycans are attached at residues Asn-155 and Asn-185. A propeptide spanning residues 206-354 (SIQIPEEDRC…AQGPHSRKNP (149 aa)) is cleaved from the precursor. One copy of the 1; approximate repeat lies at 222 to 237 (CPIDMLWDSNKCKCVL). The 4 X 16 AA repeats of C-X(10)-C-X-C-X(1,3)-C stretch occupies residues 222-318 (CPIDMLWDSN…PDTCSCEDRC (97 aa)). Repeat copies occupy residues 258–273 (CGPHMMFDEDRCECVC), 277–293 (CPKDLIQHPKNCSCFEC), and 301–318 (CQKHKLFHPDTCSCEDRC). Asn-287 carries N-linked (GlcNAc...) asparagine glycosylation.

The protein belongs to the PDGF/VEGF growth factor family. In terms of assembly, homodimer; non-covalent and antiparallel. Undergoes a complex proteolytic maturation which generates a variety of processed secreted forms with increased activity toward VEGFR-3 and VEGFR-2. VEGF-D first form an antiparallel homodimer linked by disulfide bonds before secretion. The fully processed VEGF-D is composed mostly of two VEGF homology domains (VHDs) bound by non-covalent interactions. In terms of tissue distribution, highly expressed in lung, heart, small intestine and fetal lung, and at lower levels in skeletal muscle, colon, and pancreas.

The protein resides in the secreted. Its function is as follows. Growth factor active in angiogenesis, lymphangiogenesis and endothelial cell growth, stimulating their proliferation and migration and also has effects on the permeability of blood vessels. May function in the formation of the venous and lymphatic vascular systems during embryogenesis, and also in the maintenance of differentiated lymphatic endothelium in adults. Binds and activates VEGFR-2 (KDR/FLK1) and VEGFR-3 (FLT4) receptors. This chain is Vascular endothelial growth factor D, found in Homo sapiens (Human).